The primary structure comprises 375 residues: o-succinylbenzoate synthase (375 aa).

Catalysis depends on lysine 166, which acts as the Proton donor. Residues aspartate 191, glutamate 216, and aspartate 241 each contribute to the Mg(2+) site. Lysine 265 functions as the Proton acceptor in the catalytic mechanism.

Belongs to the mandelate racemase/muconate lactonizing enzyme family. MenC type 2 subfamily. As to quaternary structure, homotetramer. A divalent metal cation is required as a cofactor.

It catalyses the reaction (1R,6R)-6-hydroxy-2-succinyl-cyclohexa-2,4-diene-1-carboxylate = 2-succinylbenzoate + H2O. It carries out the reaction N-acetyl-D-methionine = N-acetyl-L-methionine. The enzyme catalyses N-acetyl-D-phenylalanine = N-acetyl-L-phenylalanine. The protein operates within quinol/quinone metabolism; 1,4-dihydroxy-2-naphthoate biosynthesis; 1,4-dihydroxy-2-naphthoate from chorismate: step 4/7. Its pathway is quinol/quinone metabolism; menaquinone biosynthesis. Its function is as follows. Converts 2-succinyl-6-hydroxy-2,4-cyclohexadiene-1-carboxylate (SHCHC) to 2-succinylbenzoate (OSB). Also acts as a N-succinylamino acid racemase (NSAR) that catalyzes the racemization of various N-succinylamino acids, including N-succinyl-alanine and N-succinyl-phenylalanine. Can catalyze the racemization of a broad range of N-acylamino acids, including N-acetyl-methionine, N-acetyl-phenylalanine, N-carbamoyl-methionine, N-formyl-D-methionine, N-formyl-D-norleucine and N-carbamoyl-D-norleucine. May be a bifunctional enzyme involved in menaquinone biosynthesis and in an irreversible pathway for the conversion of D- to L-amino acids, thereby facilitating the survival and/or growth of the organism. The sequence is that of o-succinylbenzoate synthase from Geobacillus kaustophilus.